The chain runs to 343 residues: Acetylglutamate kinase (343 aa).

Substrate-binding positions include 98 to 99, R120, and N219; that span reads GG.

The protein belongs to the acetylglutamate kinase family. ArgB subfamily.

The protein localises to the cytoplasm. It catalyses the reaction N-acetyl-L-glutamate + ATP = N-acetyl-L-glutamyl 5-phosphate + ADP. Its pathway is amino-acid biosynthesis; L-arginine biosynthesis; N(2)-acetyl-L-ornithine from L-glutamate: step 2/4. Its function is as follows. Catalyzes the ATP-dependent phosphorylation of N-acetyl-L-glutamate. This is Acetylglutamate kinase from Frankia alni (strain DSM 45986 / CECT 9034 / ACN14a).